Consider the following 508-residue polypeptide: Glycerol kinase (508 aa).

Residue Thr14 participates in ADP binding. 3 residues coordinate ATP: Thr14, Thr15, and Ser16. Residue Thr14 participates in sn-glycerol 3-phosphate binding. Arg18 serves as a coordination point for ADP. Residues Arg84, Glu85, Tyr136, and Asp245 each contribute to the sn-glycerol 3-phosphate site. Positions 84, 85, 136, 245, and 246 each coordinate glycerol. Residues Thr267 and Gly314 each coordinate ADP. Thr267, Gly314, and Gln318 together coordinate ATP. Asn419 is an ADP binding site.

The protein belongs to the FGGY kinase family.

The catalysed reaction is glycerol + ATP = sn-glycerol 3-phosphate + ADP + H(+). The protein operates within polyol metabolism; glycerol degradation via glycerol kinase pathway; sn-glycerol 3-phosphate from glycerol: step 1/1. Its activity is regulated as follows. Inhibited by fructose 1,6-bisphosphate (FBP). In terms of biological role, key enzyme in the regulation of glycerol uptake and metabolism. Catalyzes the phosphorylation of glycerol to yield sn-glycerol 3-phosphate. This is Glycerol kinase from Bordetella pertussis (strain Tohama I / ATCC BAA-589 / NCTC 13251).